The chain runs to 596 residues: MHFSVRLSLFLTLASSLPLVSAVPQHEDQAYTFSSSGRSAATDTDPALEVRQETQRTPSAWTRLRDSLVESVWGLPQRSEGCESRPRNRAKTVSRAPATLQARYGEDVVLRFTIKNQEEVKALVEASNILFLDVWGSHDDWVDIRLSRDVIPSLLGLLPPSLQTSHVPLIRDLAQTIYESYPKAGSASPSQQGPTTRRFSPSASTSKSKPHETKNIFFQDYQPLSVLLPWMRLLVSMFSSHTTLISVGTTAEGRDIPALRVGVHPTNNAQQAPRRRTIVISGGTHAREWISVSTVSYIAYSFITGYGKSKSITKLLEQFDYVFIPTVNPDGYAYTFSTDRLWRKNRQQTSLSFCPGIDLDHSWGYEWDGNATRSNPCSESYAGDQPFEAVEAREIASWARNEVTVNNVHFVAFVDLHSYSQQILYPYGHSCAHLPANLENLEELGAGLAKAIRKSSRENYDVKAACRGIVASCTGDKDADEPATSSALESTAGSALDWFFHDLDVRFSYQIKLRDRGSYGFLLPREHIVPTGKEIYRAMVAMGKFLVSPHVLEEDIDGLRASEEPQDYDNDLEDGEDDKDEQGSTVFRAQADDLQS.

A signal peptide spans 1–22 (MHFSVRLSLFLTLASSLPLVSA). A propeptide spanning residues 23–184 (VPQHEDQAYT…QTIYESYPKA (162 aa)) is cleaved from the precursor. Residues 182 to 211 (PKAGSASPSQQGPTTRRFSPSASTSKSKPH) are disordered. Residues 187 to 207 (ASPSQQGPTTRRFSPSASTSK) are compositionally biased toward polar residues. One can recognise a Peptidase M14 domain in the interval 220-546 (DYQPLSVLLP…RAMVAMGKFL (327 aa)). Zn(2+)-binding residues include histidine 285 and glutamate 288. Substrate contacts are provided by residues 285 to 288 (HARE), arginine 343, and 360 to 361 (DH). Cysteine 354 and cysteine 377 are joined by a disulfide. N-linked (GlcNAc...) asparagine glycosylation occurs at asparagine 370. A Zn(2+)-binding site is contributed by histidine 417. A substrate-binding site is contributed by 418-419 (SY). The tract at residues 557–596 (DGLRASEEPQDYDNDLEDGEDDKDEQGSTVFRAQADDLQS) is disordered. The span at 564-580 (EPQDYDNDLEDGEDDKD) shows a compositional bias: acidic residues. Residues 583 to 596 (GSTVFRAQADDLQS) are compositionally biased toward polar residues.

It belongs to the peptidase M14 family. It depends on Zn(2+) as a cofactor.

It is found in the vacuole. The protein localises to the secreted. Functionally, inactive carboxypeptidase that may play a role in cell wall organization and biogenesis. This Arthroderma benhamiae (strain ATCC MYA-4681 / CBS 112371) (Trichophyton mentagrophytes) protein is Inactive metallocarboxypeptidase ECM14 (ECM14).